The primary structure comprises 30 residues: Serum amyloid P-component (30 aa).

The region spanning 1–30 (APQDLSGKMFIFPQETSTANVXLTARSQDF) is the Pentraxin (PTX) domain.

It belongs to the pentraxin family. As to quaternary structure, homopentamer. Discoid arrangement of 5 covalently bound subunits. Ca(2+) serves as cofactor.

It is found in the secreted. The chain is Serum amyloid P-component from Anarhichas lupus (Atlantic wolffish).